Reading from the N-terminus, the 416-residue chain is Serine hydroxymethyltransferase (416 aa).

(6S)-5,6,7,8-tetrahydrofolate-binding positions include L121 and G125 to L127. Residue K230 is modified to N6-(pyridoxal phosphate)lysine.

Belongs to the SHMT family. Homodimer. Requires pyridoxal 5'-phosphate as cofactor.

The protein resides in the cytoplasm. It carries out the reaction (6R)-5,10-methylene-5,6,7,8-tetrahydrofolate + glycine + H2O = (6S)-5,6,7,8-tetrahydrofolate + L-serine. The protein operates within one-carbon metabolism; tetrahydrofolate interconversion. Its pathway is amino-acid biosynthesis; glycine biosynthesis; glycine from L-serine: step 1/1. Catalyzes the reversible interconversion of serine and glycine with tetrahydrofolate (THF) serving as the one-carbon carrier. This reaction serves as the major source of one-carbon groups required for the biosynthesis of purines, thymidylate, methionine, and other important biomolecules. Also exhibits THF-independent aldolase activity toward beta-hydroxyamino acids, producing glycine and aldehydes, via a retro-aldol mechanism. The protein is Serine hydroxymethyltransferase of Nitrosomonas eutropha (strain DSM 101675 / C91 / Nm57).